The sequence spans 89 residues: MAHKKAGGSSRNGRDSHSKRLGVKKFGGEAVIPGNIIIRQRGTTWHPGVNVGMGTDHTLFALESGAVTFNKKANGRTYVSVNPITKAAE.

The interval 1–23 (MAHKKAGGSSRNGRDSHSKRLGV) is disordered.

It belongs to the bacterial ribosomal protein bL27 family.

The chain is Large ribosomal subunit protein bL27 from Mesorhizobium japonicum (strain LMG 29417 / CECT 9101 / MAFF 303099) (Mesorhizobium loti (strain MAFF 303099)).